A 132-amino-acid polypeptide reads, in one-letter code: MVMTDPIADLLTRIRNANMVRHEKLEVPASKIKREIAEILKREGFIRDVEYVEDSKQGIIRMFLKYGQNNERVITGLKRISKPGLRVYAKSNEVPRVLNGLGIAIISTSQGVLSDKEARAKQAGGEVLAYVW.

It belongs to the universal ribosomal protein uS8 family. As to quaternary structure, part of the 30S ribosomal subunit. Contacts proteins S5 and S12.

In terms of biological role, one of the primary rRNA binding proteins, it binds directly to 16S rRNA central domain where it helps coordinate assembly of the platform of the 30S subunit. This chain is Small ribosomal subunit protein uS8, found in Bacillus pumilus (strain SAFR-032).